The chain runs to 508 residues: Steroid 17-alpha-hydroxylase/17,20 lyase (508 aa).

Residue N202 coordinates substrate. A heme-binding site is contributed by C442.

It belongs to the cytochrome P450 family. It depends on heme as a cofactor.

It localises to the endoplasmic reticulum membrane. The protein localises to the microsome membrane. The enzyme catalyses a C21-steroid + reduced [NADPH--hemoprotein reductase] + O2 = a 17alpha-hydroxy-C21-steroid + oxidized [NADPH--hemoprotein reductase] + H2O + H(+). It carries out the reaction progesterone + reduced [NADPH--hemoprotein reductase] + O2 = 17alpha-hydroxyprogesterone + oxidized [NADPH--hemoprotein reductase] + H2O + H(+). It catalyses the reaction pregnenolone + reduced [NADPH--hemoprotein reductase] + O2 = 17alpha-hydroxypregnenolone + oxidized [NADPH--hemoprotein reductase] + H2O + H(+). The catalysed reaction is 17alpha-hydroxypregnenolone + reduced [NADPH--hemoprotein reductase] + O2 = 3beta-hydroxyandrost-5-en-17-one + acetate + oxidized [NADPH--hemoprotein reductase] + H2O + 2 H(+). The protein operates within steroid hormone biosynthesis. It functions in the pathway steroid biosynthesis; glucocorticoid biosynthesis. Its activity is regulated as follows. Regulated predominantly by intracellular cAMP levels. The 17,20-lyase activity is stimulated by cytochrome b5, which acts as an allosteric effector increasing the Vmax of the lyase activity. Its function is as follows. A cytochrome P450 monooxygenase involved in corticoid and androgen biosynthesis. Catalyzes 17-alpha hydroxylation of C21 steroids, which is common for both pathways. A second oxidative step, required only for androgen synthesis, involves an acyl-carbon cleavage. Hydroxylates pregnenolone to form 17-alpha pregnenolone, followed by the cleavage of the C17-C20 bond to form dehydroepiandrosterone (DHEA). Has 17-alpha hydroxylase activity toward progesterone. The 17-alpha hydroxy intermediates, as part of adrenal glucocorticoids biosynthesis pathway, are precursors of cortisol. Mechanistically, uses molecular oxygen inserting one oxygen atom into a substrate, and reducing the second into a water molecule, with two electrons provided by NADPH via cytochrome P450 reductase (CPR; NADPH-ferrihemoprotein reductase). This chain is Steroid 17-alpha-hydroxylase/17,20 lyase (CYP17A1), found in Papio hamadryas ursinus (Chacma baboon).